A 200-amino-acid chain; its full sequence is NADH-quinone oxidoreductase subunit C (200 aa).

It belongs to the complex I 30 kDa subunit family. In terms of assembly, NDH-1 is composed of 14 different subunits. Subunits NuoB, C, D, E, F, and G constitute the peripheral sector of the complex.

The protein resides in the cell inner membrane. The enzyme catalyses a quinone + NADH + 5 H(+)(in) = a quinol + NAD(+) + 4 H(+)(out). NDH-1 shuttles electrons from NADH, via FMN and iron-sulfur (Fe-S) centers, to quinones in the respiratory chain. The immediate electron acceptor for the enzyme in this species is believed to be ubiquinone. Couples the redox reaction to proton translocation (for every two electrons transferred, four hydrogen ions are translocated across the cytoplasmic membrane), and thus conserves the redox energy in a proton gradient. The sequence is that of NADH-quinone oxidoreductase subunit C from Maricaulis maris (strain MCS10) (Caulobacter maris).